The following is a 90-amino-acid chain: Small ribosomal subunit protein uS15 (90 aa).

This sequence belongs to the universal ribosomal protein uS15 family. In terms of assembly, part of the 30S ribosomal subunit. Forms a bridge to the 50S subunit in the 70S ribosome, contacting the 23S rRNA.

Functionally, one of the primary rRNA binding proteins, it binds directly to 16S rRNA where it helps nucleate assembly of the platform of the 30S subunit by binding and bridging several RNA helices of the 16S rRNA. Its function is as follows. Forms an intersubunit bridge (bridge B4) with the 23S rRNA of the 50S subunit in the ribosome. In Tropheryma whipplei (strain TW08/27) (Whipple's bacillus), this protein is Small ribosomal subunit protein uS15.